A 395-amino-acid chain; its full sequence is uncharacterized protein (395 aa).

Disordered stretches follow at residues 17 to 155 (EVKK…QVKT) and 276 to 304 (EEREKSAIKQNKEQSSEGSKTANQTHEQK). Composition is skewed to polar residues over residues 42–71 (DGNNQVNEPTGNDNTQVVENTEDISASNVV) and 81–96 (GDASTQSPETSENVVK). Over residues 103 to 133 (VAEKPEKEDLAVIESEDKAAKPDGEIKKNVE) the composition is skewed to basic and acidic residues. A compositionally biased stretch (low complexity) spans 134 to 143 (TEVTSRSTSS). Composition is skewed to basic and acidic residues over residues 144 to 155 (QEKDELEKQVKT) and 276 to 290 (EEREKSAIKQNKEQS). A coiled-coil region spans residues 224-351 (LKMNGKEDDL…QRRLKELEAM (128 aa)). Over residues 291 to 300 (SEGSKTANQT) the composition is skewed to polar residues.

Its subcellular location is the cytoplasm. This is an uncharacterized protein from Schizosaccharomyces pombe (strain 972 / ATCC 24843) (Fission yeast).